We begin with the raw amino-acid sequence, 458 residues long: ATP synthase subunit beta (458 aa).

148 to 155 is an ATP binding site; sequence GGAGVGKT.

It belongs to the ATPase alpha/beta chains family. As to quaternary structure, F-type ATPases have 2 components, CF(1) - the catalytic core - and CF(0) - the membrane proton channel. CF(1) has five subunits: alpha(3), beta(3), gamma(1), delta(1), epsilon(1). CF(0) has three main subunits: a(1), b(2) and c(9-12). The alpha and beta chains form an alternating ring which encloses part of the gamma chain. CF(1) is attached to CF(0) by a central stalk formed by the gamma and epsilon chains, while a peripheral stalk is formed by the delta and b chains.

Its subcellular location is the cell inner membrane. It catalyses the reaction ATP + H2O + 4 H(+)(in) = ADP + phosphate + 5 H(+)(out). In terms of biological role, produces ATP from ADP in the presence of a proton gradient across the membrane. The catalytic sites are hosted primarily by the beta subunits. The sequence is that of ATP synthase subunit beta from Shewanella pealeana (strain ATCC 700345 / ANG-SQ1).